The chain runs to 325 residues: Proto-oncogene Mas (325 aa).

The Extracellular segment spans residues 1-36; it reads MDGSNVTSFVVEEPTNISTGRNASVGNAHRQIPIVH. N-linked (GlcNAc...) asparagine glycosylation is found at Asn5, Asn16, and Asn22. The chain crosses the membrane as a helical span at residues 37-61; that stretch reads WVIMSISPVGFVENGILLWFLCFRM. Residues 62 to 65 lie on the Cytoplasmic side of the membrane; the sequence is RRNP. The chain crosses the membrane as a helical span at residues 66–86; that stretch reads FTVYITHLSIADISLLFCIFI. The Extracellular segment spans residues 87–104; it reads LSIDYALDYELSSGHYYT. The chain crosses the membrane as a helical span at residues 105-128; that stretch reads IVTLSVTFLFGYNTGLYLLTAISV. Topologically, residues 129–149 are cytoplasmic; that stretch reads ERCLSVLYPIWYRCHRPKYQS. A helical transmembrane segment spans residues 150–172; the sequence is ALVCALLWALSCLVTTMEYVMCI. Over 173 to 185 the chain is Extracellular; that stretch reads DREEESHSRNDCR. The chain crosses the membrane as a helical span at residues 186–206; it reads AVIIFIAILSFLVFTPLMLVS. The Cytoplasmic segment spans residues 207-224; sequence STILVVKIRKNTWASHSS. A helical transmembrane segment spans residues 225-245; sequence KLYIVIMVTIIIFLIFAMPMR. The Extracellular portion of the chain corresponds to 246-263; the sequence is LLYLLYYEYWSTFGNLHH. Residues 264–284 form a helical membrane-spanning segment; sequence ISLLFSTINSSANPFIYFFVG. Residues 285–325 lie on the Cytoplasmic side of the membrane; sequence SSKKKRFKESLKVVLTRAFKDEMQPRRQKDNCNTVTVETVV.

Belongs to the G-protein coupled receptor 1 family. As to quaternary structure, interacts with AGTR1. Interacts with FLNA (via filamin repeat 21); increases PKA-mediated phosphorylation of FLNA.

Its subcellular location is the cell membrane. Receptor for angiotensin 1-7. Acts specifically as a functional antagonist of AGTR1 (angiotensin-2 type 1 receptor), although it up-regulates AGTR1 receptor levels. Positive regulation of AGTR1 levels occurs through activation of the G-proteins GNA11 and GNAQ, and stimulation of the protein kinase C signaling cascade. The antagonist effect on AGTR1 function is probably due to AGTR1 being physically altered by MAS1. In Homo sapiens (Human), this protein is Proto-oncogene Mas (MAS1).